A 290-amino-acid chain; its full sequence is uncharacterized protein (290 aa).

The next 6 membrane-spanning stretches (helical) occupy residues 71-91 (FWSF…VKNI), 124-144 (GILI…LPGM), 155-175 (IIIG…YILV), 202-222 (FILV…LQLV), 234-254 (MFSI…VLTP), and 262-282 (ILLS…VLVV).

It belongs to the TatC family.

The protein localises to the plastid. Its subcellular location is the chloroplast membrane. This is an uncharacterized protein from Guillardia theta (Cryptophyte).